Reading from the N-terminus, the 139-residue chain is MRQFEFFEHTADVGIKSYGRSLEEAFSNAALGVFEVITDTSKVRPVEYREIYLNGYDLENLLYKWIEELLYYYDSELMIFSKFDLMIDQDSITLEGKAWGERFNDKIHERRTVVKAMTYHQLSIEKTESGYVITFVVDI.

Positions 12, 138, and 139 each coordinate Ca(2+).

It belongs to the archease family.

Functionally, activates the tRNA-splicing ligase complex by facilitating the enzymatic turnover of catalytic subunit RtcB. Acts by promoting the guanylylation of RtcB, a key intermediate step in tRNA ligation. Can also alter the NTP specificity of RtcB such that ATP, dGTP or ITP is used efficiently. The polypeptide is Protein archease (Saccharolobus solfataricus (strain ATCC 35092 / DSM 1617 / JCM 11322 / P2) (Sulfolobus solfataricus)).